Consider the following 248-residue polypeptide: Type II restriction enzyme XhoI (248 aa).

The protein belongs to the XhoI type II restriction endonuclease family.

It carries out the reaction Endonucleolytic cleavage of DNA to give specific double-stranded fragments with terminal 5'-phosphates.. Its function is as follows. A P subtype restriction enzyme that recognizes the double-stranded sequence 5'-CTCGAG-3' and cleaves after C-1. In Xanthomonas vasicola, this protein is Type II restriction enzyme XhoI.